The following is a 501-amino-acid chain: Symplectin (501 aa).

Residues proline 20 to proline 287 enclose the CN hydrolase domain. The active-site Proton acceptor is glutamate 60. Residue lysine 163 is the Proton donor of the active site. Cysteine 196 serves as the catalytic Nucleophile. Residue cysteine 390 is modified to S-(coelenterazin-3a-yl)cysteine.

The protein belongs to the carbon-nitrogen hydrolase superfamily. BTD/VNN family. As to expression, photogenic gland (at protein level).

Its function is as follows. Monovalent ion-dependent bioluminescence photoprotein. Displays an emission peak at 470 nm (blue light). Trace amounts of monovalent ion trigger the intramolecular oxidation of the chromophore, didehydrocoelenterazine, with the emission of light. The chain is Symplectin from Sthenoteuthis oualaniensis (Purpleback flying squid).